The primary structure comprises 380 residues: Oocyte-specific homeobox protein 4 (380 aa).

Disordered regions lie at residues 1 to 25, 43 to 95, 152 to 182, 234 to 303, and 339 to 380; these read MSKD…SFLV, VTPT…RKCR, KSSQ…FAAS, PRQK…CQTP, and TRSK…SSAY. Polar residues predominate over residues 43 to 53; it reads VTPTRPLQSSH. Over residues 54–67 the composition is skewed to basic and acidic residues; sequence SVHERDLHQKDSQE. The homeobox DNA-binding region spans 94–153; it reads CRKERTVYSKEQKCLLQEHFHQCQNPDLEQRKALALLIGVTEYKIQTWFKNRRAKECRKS. Over residues 234–250 the composition is skewed to basic and acidic residues; sequence PRQKCRELSREPGHLSS. Over residues 260–271 the composition is skewed to low complexity; the sequence is SSPSPAAGAESS. Composition is skewed to polar residues over residues 278-302 and 351-380; these read LSLS…MCQT and NTVQ…SSAY.

It belongs to the paired homeobox family. Obox subfamily. Specifically expressed in early embryos.

It localises to the nucleus. Functionally, transcription factor required for zygotic genome activation (ZGA), a critical event in early embryonic development during which the developmental control passes from maternally provided mRNAs to the expression of the zygotic genome after fertilization. Cannot compensate for loss of other members of the Obox family, suggesting that its function differs from other Obox family members. May regulate expression of histone genes in embryonic stem cells. Also involved in completion of meiosis of oocytes during the meiosis-I/meiosis-II transition. Required to maintain the nuclear membrane of the germinal vesicle in oocytes. The sequence is that of Oocyte-specific homeobox protein 4 from Mus musculus (Mouse).